We begin with the raw amino-acid sequence, 852 residues long: MNGHFAAVGNGPTAQQYEHGIQVIDEDKAFNTNLNDYLGETRVAEAGFNYHLISVFGSQSTGKSTLLNHLFKTEFSVMSESARRQTTKGIWMSKNKRAGANGDAATMADNILVMDVEGTDGRERGEDQDFERKSALFALATSEVLIVNIWEHQIGLYQGANMGLLKTVFEVNLQLFLKDRQSQTRSLLFFVIRDHVGNTPLANLRDTLVQDLTKIWSTLSKPQGLEDSKIEDYFDFAFAALPHKILQPEKFLEEADKLSTRFTTGHRSAKDQEFVGGVFLPEYHRRIPADGLSVYAEGVWDQIVNNKDLDLPTQQELLAQFRCDEISREVFVGFDSVIVPLEEQQAEATRLGKATVLPDLGVTGAGTREKCVKAFETQASRYHKGVYSVKRGELESKIDARLKALYQTQLSAAHKSGVAAFSDAVTNAVKAGQKAGGYEFAEIVDKQKKKTLEFFKKEAQSLLIQGVAWTNFKPQYRLFEKELDEVSARLRKEEMRRLAIRVERWVKSRLGDSIGVEFNKLGSGRGGSGAPENGEKPATEKDLWDRIWNTFSGIIREAETRFADRAKSFEASPEEVEVGLWRLRRKSWVALREKIEEEMMESNILMKLRENFEDKFRYDEEGVPRIWRPTDDIEGIYTRARESTLGLIPLLARFRLAETYAPPDLPTFVGPQPAGAEPEDEEDLAPIGGVDEEEGKSLEEEMTVLSESKRQDLVVRFKKMADGVYVEAKRSAIGGITQVPLYFYIVLLIFGWNEIVMVLRNPMLFMLLLVMGGGTYVAYTLNLLGPMMQMANAASNQAVEIGKEKLRDFLENNQTMRQAIAMPPRSQDNGIGMDRLDSRGKKAQEVEEDDDI.

The Cytoplasmic segment spans residues 1 to 738; that stretch reads MNGHFAAVGN…KRSAIGGITQ (738 aa). Residues 47–283 form the GB1/RHD3-type G domain; that stretch reads GFNYHLISVF…FVGGVFLPEY (237 aa). 57–64 is a binding site for GTP; the sequence is GSQSTGKS. The stretch at 475–500 forms a coiled coil; sequence QYRLFEKELDEVSARLRKEEMRRLAI. The chain crosses the membrane as a helical span at residues 739-759; that stretch reads VPLYFYIVLLIFGWNEIVMVL. Over 760-762 the chain is Lumenal; the sequence is RNP. The helical transmembrane segment at 763 to 783 threads the bilayer; it reads MLFMLLLVMGGGTYVAYTLNL. Residues 784–852 lie on the Cytoplasmic side of the membrane; the sequence is LGPMMQMANA…AQEVEEDDDI (69 aa). The segment at 825 to 852 is disordered; that stretch reads RSQDNGIGMDRLDSRGKKAQEVEEDDDI. The segment covering 834–845 has biased composition (basic and acidic residues); sequence DRLDSRGKKAQE.

This sequence belongs to the TRAFAC class dynamin-like GTPase superfamily. GB1/RHD3 GTPase family. RHD3 subfamily.

Its subcellular location is the endoplasmic reticulum membrane. Its function is as follows. Cooperates with the reticulon proteins and tubule-shaping DP1 family proteins to generate and maintain the structure of the tubular endoplasmic reticulum network. Has GTPase activity, which is required for its function in ER organization. The chain is Protein SEY1 from Chaetomium globosum (strain ATCC 6205 / CBS 148.51 / DSM 1962 / NBRC 6347 / NRRL 1970) (Soil fungus).